The primary structure comprises 717 residues: SUN domain-containing protein 2 (717 aa).

The interval 1–66 is disordered; it reads MSRRSQRLTR…PQLGPSSDAH (66 aa). The tract at residues 1–139 is LMNA-binding; sequence MSRRSQRLTR…SSSGYSSEDD (139 aa). Topologically, residues 1 to 212 are nuclear; it reads MSRRSQRLTR…LTRRFSSLKT (212 aa). Position 12 is a phosphoserine (S12). Residues 19–32 are compositionally biased toward low complexity; that stretch reads SSSSGGSSVAGSQS. Residues S38 and S54 each carry the phosphoserine modification. T107 is subject to Phosphothreonine. Phosphoserine is present on residues S110, S113, S116, and S136. The chain crosses the membrane as a helical span at residues 213–233; that stretch reads FLWFLLPLLLLTCLTYGAWYF. Over 234 to 717 the chain is Perinuclear space; the sequence is YPYGLQTFHP…RFRVHGEPAH (484 aa). Coiled coils occupy residues 273–296, 348–440, and 475–506; these read EQRVMSRVHSLERRLEALAAEFSS, RRET…EEVG, and LLQREEMQAQLRELESKILTHVAEMQGKSARE. The segment at 507-717 is sufficient for interaction with SYNE1 and SYNE2; sequence AAASLSLTLQ…RFRVHGEPAH (211 aa). Residues 555–716 form the SUN domain; the sequence is GASVISTRCS…YRFRVHGEPA (162 aa). A disulfide bond links C601 and C705. N-linked (GlcNAc...) asparagine glycosylation occurs at N636.

Core component of the LINC complex which is composed of inner nuclear membrane SUN domain-containing proteins coupled to outer nuclear membrane KASH domain-containing nesprins. SUN and KASH domain-containing proteins seem to bind each other promiscuously; however, differentially expression of LINC complex constituents is giving rise to specific assemblies. At least SUN1/2-containing core LINC complexes are proposed to be hexameric composed of three protomers of each KASH and SUN domain-containing protein. Interacts with SYNE2; the SUN2:SYNE2/KASH2 LINC complex is a heterohexamer; the homotrimeric cloverleave-like conformation of the SUN domain is a prerequisite for LINC complex formation in which three separate SYNE2/KASH2 peptides bind at the interface of adjacent SUN domains. Component of a probable SUN2:KASH5 LINC complex. Interacts with SYNE1 and SYNE3; probably forming respective LINC complexes. Interacts with A-type lamin. Interaction with lamins B1 and C is hardly detectable. Interacts with EMD and RAB5A. Interacts with TMEM43. Interacts with TMEM201. The disulfide bond with SYNE2 is required for stability of the SUN2:SYNE2/KASH2 LINC complex under tensile forces though not required for the interaction. The disulfide bond is proposed to be conserved in LINC complexes involved in force transmission. In terms of tissue distribution, widely expressed. Highly expressed in heart, lung and muscle. Weakly expressed in fetal heart. Slightly overexpressed in some heart tissues form patients with congenital heart defects.

The protein localises to the nucleus inner membrane. It localises to the nucleus envelope. The protein resides in the endosome membrane. As a component of the LINC (LInker of Nucleoskeleton and Cytoskeleton) complex, involved in the connection between the nuclear lamina and the cytoskeleton. The nucleocytoplasmic interactions established by the LINC complex play an important role in the transmission of mechanical forces across the nuclear envelope and in nuclear movement and positioning. Specifically, SYNE2 and SUN2 assemble in arrays of transmembrane actin-associated nuclear (TAN) lines which are bound to F-actin cables and couple the nucleus to retrograde actin flow during actin-dependent nuclear movement. Required for interkinetic nuclear migration (INM) and essential for nucleokinesis and centrosome-nucleus coupling during radial neuronal migration in the cerebral cortex and during glial migration. Required for nuclear migration in retinal photoreceptor progenitors implicating association with cytoplasmic dynein-dynactin and kinesin motor complexes, and probably B-type lamins; SUN1 and SUN2 seem to act redundantly. The SUN1/2:KASH5 LINC complex couples telomeres to microtubules during meiosis; SUN1 and SUN2 seem to act at least partial redundantly. Anchors chromosome movement in the prophase of meiosis and is involved in selective gene expression of coding and non-coding RNAs needed for gametogenesis. Required for telomere attachment to nuclear envelope and gametogenesis. May also function on endocytic vesicles as a receptor for RAB5-GDP and participate in the activation of RAB5. This chain is SUN domain-containing protein 2, found in Homo sapiens (Human).